Here is a 24-residue protein sequence, read N- to C-terminus: Positive regulator of RepFIC repA1 expression (24 aa).

This chain is Positive regulator of RepFIC repA1 expression (repL), found in Escherichia coli (strain K12).